Here is a 219-residue protein sequence, read N- to C-terminus: Poxin (219 aa).

The active-site Proton donor is the histidine 17. Tyrosine 138 functions as the Shared with catalytic histidine of dimeric partner in the catalytic mechanism. Residue lysine 142 is the Proton acceptor; shared with catalytic histidine of dimeric partner of the active site.

The protein belongs to the poxin family. As to quaternary structure, homodimer.

The catalysed reaction is 2',3'-cGAMP + H2O = Gp(2'-5')Ap(3') + H(+). Functionally, nuclease that is responsible for viral evasion of host cGAS-STING innate immunity. Cleaves 2',3'-cGAMP which is produced by host cGAS following recognition of cytosolic DNA and blocks the subsequent 2',3'-cGAMP-mediated activation of TMEM173/STING, which normally spreads to adjacent cells and activates the interferon and NF-kappa-B immune responses. This is Poxin (OPG188) from Homo sapiens (Human).